The sequence spans 214 residues: ATP-dependent Clp protease proteolytic subunit (214 aa).

The active-site Nucleophile is the Ser114. His139 is a catalytic residue.

Belongs to the peptidase S14 family. As to quaternary structure, fourteen ClpP subunits assemble into 2 heptameric rings which stack back to back to give a disk-like structure with a central cavity, resembling the structure of eukaryotic proteasomes.

Its subcellular location is the cytoplasm. The enzyme catalyses Hydrolysis of proteins to small peptides in the presence of ATP and magnesium. alpha-casein is the usual test substrate. In the absence of ATP, only oligopeptides shorter than five residues are hydrolyzed (such as succinyl-Leu-Tyr-|-NHMec, and Leu-Tyr-Leu-|-Tyr-Trp, in which cleavage of the -Tyr-|-Leu- and -Tyr-|-Trp bonds also occurs).. Functionally, cleaves peptides in various proteins in a process that requires ATP hydrolysis. Has a chymotrypsin-like activity. Plays a major role in the degradation of misfolded proteins. The chain is ATP-dependent Clp protease proteolytic subunit from Nitrosomonas eutropha (strain DSM 101675 / C91 / Nm57).